Consider the following 1321-residue polypeptide: Lysine-specific demethylase 3A (1321 aa).

Phosphoserine occurs at positions 264 and 325. Disordered regions lie at residues 307 to 336, 383 to 402, and 438 to 472; these read ATPP…IPQG, LTEP…QENR, and KHLE…GKKV. The segment covering 316-327 has biased composition (polar residues); it reads QQSTPQAANSPP. The residue at position 445 (Ser445) is a Phosphoserine. Residues 662 to 687 form a C6-type zinc finger; it reads CDVCDTTIFNLHWVCPRCGFGVCVDC. Ser766 is subject to Phosphoserine. Residues 885–889 carry the LXXLL motif motif; it reads LRNLL. Lys895 carries the post-translational modification N6-acetyllysine. One can recognise a JmjC domain in the interval 1058-1281; sequence MPSRFDDLMA…HCFWLTQEFR (224 aa). The Fe cation site is built by His1120, Asp1122, and His1249.

This sequence belongs to the JHDM2 histone demethylase family. In terms of assembly, interacts with VRK1. Fe(2+) is required as a cofactor.

It localises to the cytoplasm. Its subcellular location is the nucleus. It carries out the reaction N(6),N(6)-dimethyl-L-lysyl(9)-[histone H3] + 2 2-oxoglutarate + 2 O2 = L-lysyl(9)-[histone H3] + 2 formaldehyde + 2 succinate + 2 CO2. In terms of biological role, histone demethylase that specifically demethylates 'Lys-9' of histone H3, thereby playing a central role in histone code. Preferentially demethylates mono- and dimethylated H3 'Lys-9' residue, with a preference for dimethylated residue, while it has weak or no activity on trimethylated H3 'Lys-9'. Demethylation of Lys residue generates formaldehyde and succinate. Involved in hormone-dependent transcriptional activation, by participating in recruitment to androgen-receptor target genes, resulting in H3 'Lys-9' demethylation and transcriptional activation. Involved in spermatogenesis by regulating expression of target genes such as PRM1 and TNP1 which are required for packaging and condensation of sperm chromatin. Involved in obesity resistance through regulation of metabolic genes such as PPARA and UCP1. The polypeptide is Lysine-specific demethylase 3A (KDM3A) (Homo sapiens (Human)).